The primary structure comprises 330 residues: Ketol-acid reductoisomerase (NADP(+)) (330 aa).

One can recognise a KARI N-terminal Rossmann domain in the interval 3-184 (LPVYYDKDID…GGGRMGVLET (182 aa)). NADP(+)-binding positions include 26 to 29 (YGAQ), Ser-52, and Ser-54. Residue His-109 is part of the active site. Gly-135 is an NADP(+) binding site. One can recognise a KARI C-terminal knotted domain in the interval 185-329 (SFKEECESDL…EILRAPFNHK (145 aa)). Residues Asp-193, Glu-197, Glu-229, and Glu-233 each contribute to the Mg(2+) site. Ser-254 is a substrate binding site.

This sequence belongs to the ketol-acid reductoisomerase family. Requires Mg(2+) as cofactor.

It catalyses the reaction (2R)-2,3-dihydroxy-3-methylbutanoate + NADP(+) = (2S)-2-acetolactate + NADPH + H(+). The enzyme catalyses (2R,3R)-2,3-dihydroxy-3-methylpentanoate + NADP(+) = (S)-2-ethyl-2-hydroxy-3-oxobutanoate + NADPH + H(+). It participates in amino-acid biosynthesis; L-isoleucine biosynthesis; L-isoleucine from 2-oxobutanoate: step 2/4. Its pathway is amino-acid biosynthesis; L-valine biosynthesis; L-valine from pyruvate: step 2/4. Functionally, involved in the biosynthesis of branched-chain amino acids (BCAA). Catalyzes an alkyl-migration followed by a ketol-acid reduction of (S)-2-acetolactate (S2AL) to yield (R)-2,3-dihydroxy-isovalerate. In the isomerase reaction, S2AL is rearranged via a Mg-dependent methyl migration to produce 3-hydroxy-3-methyl-2-ketobutyrate (HMKB). In the reductase reaction, this 2-ketoacid undergoes a metal-dependent reduction by NADPH to yield (R)-2,3-dihydroxy-isovalerate. In Helicobacter pylori (strain ATCC 700392 / 26695) (Campylobacter pylori), this protein is Ketol-acid reductoisomerase (NADP(+)).